A 79-amino-acid polypeptide reads, in one-letter code: Small ribosomal subunit protein eS17 (79 aa).

Belongs to the eukaryotic ribosomal protein eS17 family.

The sequence is that of Small ribosomal subunit protein eS17 from Saccharolobus islandicus (strain Y.N.15.51 / Yellowstone #2) (Sulfolobus islandicus).